The primary structure comprises 333 residues: Flotillin-like protein FloA (333 aa).

A helical transmembrane segment spans residues 10–30; sequence IFLIAGGIIFLVLFFHYVPFF.

Belongs to the flotillin-like FloA family. In terms of assembly, homooligomerizes.

It localises to the cell membrane. The protein resides in the membrane raft. In terms of biological role, found in functional membrane microdomains (FMM) that may be equivalent to eukaryotic membrane rafts. FMMs are highly dynamic and increase in number as cells age. Flotillins are thought to be important factors in membrane fluidity. The protein is Flotillin-like protein FloA of Bacteroides fragilis (strain ATCC 25285 / DSM 2151 / CCUG 4856 / JCM 11019 / LMG 10263 / NCTC 9343 / Onslow / VPI 2553 / EN-2).